A 418-amino-acid polypeptide reads, in one-letter code: Glycine betaine transport ATP-binding protein OpuAA (418 aa).

The 237-residue stretch at 34–270 folds into the ABC transporter domain; it reads KTKKEILKAT…PSNEYVEKFV (237 aa). ATP is bound at residue 66–73; that stretch reads GLSGSGKS. 2 CBS domains span residues 284-340 and 344-403; these read IMKR…DLSL and LNTE…INAE.

The protein belongs to the ABC transporter superfamily. The complex is composed of two ATP-binding proteins (OpuAA), two transmembrane proteins (OpuAB) and a solute-binding protein (OpuAC).

It catalyses the reaction a quaternary ammonium(out) + ATP + H2O = a quaternary ammonium(in) + ADP + phosphate + H(+). Its function is as follows. Involved in a multicomponent binding-protein-dependent transport system for glycine betaine. Probably responsible for energy coupling to the transport system. In Bacillus subtilis (strain 168), this protein is Glycine betaine transport ATP-binding protein OpuAA (opuAA).